A 575-amino-acid polypeptide reads, in one-letter code: Jasmonoyl--L-amino acid synthetase JAR1 (575 aa).

Residues 10–30 adopt a coiled-coil conformation; it reads MNRVIDEFDEMTRNAHQVQKQ. Residue Ser98 coordinates ATP. Jasmonate is bound at residue Ser101. ATP-binding positions include Met118, Thr121, Gly163, Asn168, and 331–336; that span reads GSSEGW. An an L-alpha-amino acid-binding site is contributed by 166–170; that stretch reads TTNVY. Jasmonate is bound at residue 328–331; sequence HDYG. 530–534 contacts an L-alpha-amino acid; sequence KIQEH. Lys557 contributes to the ATP binding site.

Belongs to the IAA-amido conjugating enzyme family. As to quaternary structure, interacts with GSTU20/FIP1 under continuous far red (cFR) light; this binding increases its activity and determines the priority of substrate binding.

The protein localises to the cytoplasm. It carries out the reaction a jasmonate + an L-alpha-amino acid + ATP = a jasmonyl-L-amino acid + AMP + diphosphate + H(+). The enzyme catalyses (+)-7-isojasmonate + L-isoleucine + ATP = L-isoleucine-(+)-7-isojasmonate + AMP + diphosphate + H(+). Its activity is regulated as follows. Activated by GSTU20/FIP1. Catalyzes the synthesis of jasmonates-amino acid conjugates by adenylation; can use Ile and, in vitro at least, Val, Leu and Phe as conjugating amino acids on jasmonic acid (JA) and 9,10-dihydro-JA substrates, and to a lower extent, on 3-oxo-2-(2Z-pentenyl)-cyclopentane-1-butyric acid (OPC-4) and 12-hydroxy-JA (12-OH-JA). Can synthesize adenosine 5-tetraphosphate in vitro. Required for the JA-mediated signaling pathway that regulates many developmental and defense mechanisms, including growth root inhibition, vegetative storage proteins (VSPs) accumulation, induced systemic resistance (ISR), response to wounding and herbivores, tolerance to ozone O(3) (probably having a role in lesion containment). Plays an important role in the accumulation of JA-Ile in response to wounding, both locally and systemically; promotes JA responding genes especially in distal part of wounded plants, via the JA-Ile-stimulated degradation of JAZ repressor proteins by the SCF(COI)E3 ubiquitin-protein ligase pathway. Involved in the apoptosis-like programmed cell death (PCD) induced by fungal toxin fumonisin B1-mediated (FB1). Required for volatile compounds (C6-aldehydes and allo-ocimene)-mediated defense activation. Involved in the non-pathogenic rhizobacterium-mediated ISR (defense priming) by P.fluorescens (strains CHAOr and WCS417r) and P.putida LSW17S against infection leaf pathogens such as P.syringae pv. tomato and H.parasitica. Required for the JA-dependent resistance to fungi such as P.irregulare, U.vignae and U.appendiculatus. Necessary to induce systemic resistance against R.solanaceraum and P.syringae pv. tomato with P.oligandrum (a non-pathogenic biocontrol agent) cell wall protein fraction (CWP). Mediates PGIP2 accumulation in response to B.cinerea infection and thus contributes to resistance against this pathogen. Modulates the UV-B alteration of leaves attractiveness to diamondback moths P.xylostella leading to insect oviposition. Involved in the regulation of far-red light influence on development, being an actor of the interplay between light and JA signaling. Seems necessary for the salicylic acid (SA)-mediated, NPR1-independent resistance pathway. May contribute to the chitin-elicited pathway. Contributes to the sensitivity toward F.graminearum. This chain is Jasmonoyl--L-amino acid synthetase JAR1, found in Arabidopsis thaliana (Mouse-ear cress).